A 367-amino-acid polypeptide reads, in one-letter code: UDP-N-acetylglucosamine--N-acetylmuramyl-(pentapeptide) pyrophosphoryl-undecaprenol N-acetylglucosamine transferase (367 aa).

UDP-N-acetyl-alpha-D-glucosamine-binding positions include 13–15 (TGG), Asn125, Arg165, Ser192, and Gln293.

The protein belongs to the glycosyltransferase 28 family. MurG subfamily.

The protein localises to the cell inner membrane. It catalyses the reaction di-trans,octa-cis-undecaprenyl diphospho-N-acetyl-alpha-D-muramoyl-L-alanyl-D-glutamyl-meso-2,6-diaminopimeloyl-D-alanyl-D-alanine + UDP-N-acetyl-alpha-D-glucosamine = di-trans,octa-cis-undecaprenyl diphospho-[N-acetyl-alpha-D-glucosaminyl-(1-&gt;4)]-N-acetyl-alpha-D-muramoyl-L-alanyl-D-glutamyl-meso-2,6-diaminopimeloyl-D-alanyl-D-alanine + UDP + H(+). It functions in the pathway cell wall biogenesis; peptidoglycan biosynthesis. Functionally, cell wall formation. Catalyzes the transfer of a GlcNAc subunit on undecaprenyl-pyrophosphoryl-MurNAc-pentapeptide (lipid intermediate I) to form undecaprenyl-pyrophosphoryl-MurNAc-(pentapeptide)GlcNAc (lipid intermediate II). The chain is UDP-N-acetylglucosamine--N-acetylmuramyl-(pentapeptide) pyrophosphoryl-undecaprenol N-acetylglucosamine transferase from Jannaschia sp. (strain CCS1).